Consider the following 306-residue polypeptide: tRNA dimethylallyltransferase (306 aa).

6-13 (GPTASGKS) contacts ATP. Substrate is bound at residue 8-13 (TASGKS).

It belongs to the IPP transferase family. Monomer. It depends on Mg(2+) as a cofactor.

It carries out the reaction adenosine(37) in tRNA + dimethylallyl diphosphate = N(6)-dimethylallyladenosine(37) in tRNA + diphosphate. Catalyzes the transfer of a dimethylallyl group onto the adenine at position 37 in tRNAs that read codons beginning with uridine, leading to the formation of N6-(dimethylallyl)adenosine (i(6)A). The sequence is that of tRNA dimethylallyltransferase from Sphingopyxis alaskensis (strain DSM 13593 / LMG 18877 / RB2256) (Sphingomonas alaskensis).